The following is a 393-amino-acid chain: Potassium channel subfamily K member 4 (393 aa).

Over 1 to 3 (MRS) the chain is Cytoplasmic. Residues 4–24 (TTLLALLALVLLYLVSGALVF) form a helical membrane-spanning segment. The Extracellular segment spans residues 25 to 87 (RALEQPHEQQ…NSTSNSSHSA (63 aa)). Residues Asn78 and Asn82 are each glycosylated (N-linked (GlcNAc...) asparagine). Residues 88-102 (WDLGSAFFFSGTIIT) constitute an intramembrane region (helical). Residues Thr103, Ile104, Gly105, and Tyr106 each contribute to the K(+) site. The selectivity filter 1 stretch occupies residues 103-108 (TIGYGN). An intramembrane segment occupies 103–109 (TIGYGNV). The Extracellular portion of the chain corresponds to 110 to 117 (ALRTDAGR). A helical membrane pass occupies residues 118–150 (LFCIFYALVGIPLFGILLAGVGDRLGSSLRHGI). The Cytoplasmic segment spans residues 151–172 (GHIEAIFLKWHVPPELVRVLSA). Residues 173-194 (MLFLLIGCLLFVLTPTFVFCYM) traverse the membrane as a helical segment. The Extracellular portion of the chain corresponds to 195–199 (EDWSK). The helical intramembrane region spans 200–213 (LEAIYFVIVTLTTV). Residues Thr212, Val213, Gly214, and Phe215 each contribute to the K(+) site. The tract at residues 212–217 (TVGFGD) is selectivity filter 2. Residues 214-219 (GFGDYV) lie within the membrane without spanning it. Residues 220–233 (AGADPRQDSPAYQP) are Extracellular-facing. A helical membrane pass occupies residues 234-260 (LVWFWILLGLAYFASVLTTIGNWLRVV). Over 261–393 (SRRTRAEMGG…GRPRDKGVPV (133 aa)) the chain is Cytoplasmic. The tract at residues 285 to 393 (RVTQRAGPAA…GRPRDKGVPV (109 aa)) is disordered. Residues 319–332 (SPSPPEKAQPPSPP) are compositionally biased toward pro residues. Residues 365–384 (PRGRRRPNPPRKPVRPRGPG) are compositionally biased toward basic residues.

Belongs to the two pore domain potassium channel (TC 1.A.1.8) family. Homodimer; disulfide-linked. Forms heterodimers with other 2-pore domain K(+) channel subunits, such as KCNK2 and KCNK10. Post-translationally, N-glycosylated.

Its subcellular location is the cell membrane. It is found in the cell projection. It localises to the axon. The catalysed reaction is K(+)(in) = K(+)(out). It catalyses the reaction Rb(+)(in) = Rb(+)(out). It carries out the reaction Cs(+)(in) = Cs(+)(out). With respect to regulation, activated by mechanical stretch and arachidonic acid. Functionally, k(+) channel that conducts voltage-dependent outward rectifying currents upon membrane depolarization. Voltage sensing is coupled to K(+) electrochemical gradient in an 'ion flux gating' mode where outward but not inward ion flow opens the gate. Converts to voltage-independent 'leak' conductance mode upon stimulation by various stimuli including mechanical membrane stretch, basic pH, heat and lipids. Homo- and heterodimerizes to form functional channels with distinct regulatory and gating properties. At trigeminal A-beta afferent nerves, the heterodimer of KCNK2/TREK-1 and KCNK4/TRAAK is mostly coexpressed at nodes of Ranvier where it conducts voltage-independent mechanosensitive and thermosensitive currents, allowing rapid action potential repolarization, high speed and high frequence saltatory conduction on myelinated nerves to ensure prompt sensory responses. Permeable to other monovalent cations such as Rb(+) and Cs(+). The sequence is that of Potassium channel subfamily K member 4 from Homo sapiens (Human).